The sequence spans 352 residues: Selenide, water dikinase (352 aa).

C23 is an active-site residue. ATP-binding positions include K26 and S54 to D56. D57 contributes to the Mg(2+) binding site. Residues D74, D97, and G145–S147 each bind ATP. D97 contacts Mg(2+). D233 provides a ligand contact to Mg(2+).

The protein belongs to the selenophosphate synthase 1 family. Class I subfamily. As to quaternary structure, homodimer. It depends on Mg(2+) as a cofactor.

The enzyme catalyses hydrogenselenide + ATP + H2O = selenophosphate + AMP + phosphate + 2 H(+). Its function is as follows. Synthesizes selenophosphate from selenide and ATP. The polypeptide is Selenide, water dikinase (Shewanella baltica (strain OS223)).